The sequence spans 56 residues: UPF0391 membrane protein Jann_3570 (56 aa).

A run of 2 helical transmembrane segments spans residues 4-24 and 29-48; these read WAVTFLIIALIAALFGFGGIA and GIAQILFFVFIALFAISLVA.

Belongs to the UPF0391 family.

Its subcellular location is the cell membrane. In Jannaschia sp. (strain CCS1), this protein is UPF0391 membrane protein Jann_3570.